Here is a 90-residue protein sequence, read N- to C-terminus: Bombyxin B-3 (90 aa).

The signal sequence occupies residues methionine 1–serine 20. 3 disulfide bridges follow: cysteine 30-cysteine 76, cysteine 42-cysteine 89, and cysteine 75-cysteine 80. Positions serine 49–glycine 67 are cleaved as a propeptide — c peptide like.

The protein belongs to the insulin family. In terms of assembly, heterodimer of a B chain and an A chain linked by two disulfide bonds.

The protein resides in the secreted. Its function is as follows. Brain peptide responsible for activation of prothoracic glands to produce ecdysone in insects. The chain is Bombyxin B-3 (BBXB3) from Bombyx mori (Silk moth).